The sequence spans 98 residues: YTKMKTATNIYIFNLALADALATSTLPFQSVNYLMGTWPFGTILCKIVISIDYYNMFTSIFTLCTMSVDRYIAVCHPVKALDFRTPRNAKTVNVCNWI.

Topologically, residues 1-9 (YTKMKTATN) are cytoplasmic. Residues 10–34 (IYIFNLALADALATSTLPFQSVNYL) form a helical membrane-spanning segment. Over 35–45 (MGTWPFGTILC) the chain is Extracellular. A helical transmembrane segment spans residues 46-68 (KIVISIDYYNMFTSIFTLCTMSV). Over 69–88 (DRYIAVCHPVKALDFRTPRN) the chain is Cytoplasmic. Tyr-71 carries the post-translational modification Phosphotyrosine. The chain crosses the membrane as a helical span at residues 89–98 (AKTVNVCNWI).

The protein belongs to the G-protein coupled receptor 1 family. In terms of assembly, forms homooligomers and heterooligomers with other GPCRs, such as OPRD1, OPRK1, OPRL1, NPFFR2, ADRA2A, SSTR2, CNR1 and CCR5 (probably in dimeric forms). Interacts with heterotrimeric G proteins; interaction with a heterotrimeric complex containing GNAI1, GNB1 and GNG2 stabilizes the active conformation of the receptor and increases its affinity for endomorphin-2, the synthetic opioid peptide DAMGO and for morphinan agonists. Interacts with PPL; the interaction disrupts agonist-mediated G-protein activation. Interacts (via C-terminus) with DNAJB4 (via C-terminus). Interacts with calmodulin; the interaction inhibits the constitutive activity of OPRM1; it abolishes basal and attenuates agonist-stimulated G-protein coupling. Interacts with FLNA, PLD2, RANBP9 and WLS and GPM6A. Interacts with RTP4. Interacts with SYP and GNAS. Interacts with RGS9, RGS17, RGS20, RGS4, PPP1R9B and HINT1. Phosphorylated. Differentially phosphorylated in basal and agonist-induced conditions. Agonist-mediated phosphorylation modulates receptor internalization. Phosphorylated by GRK2 in a agonist-dependent manner. Phosphorylated on tyrosine residues; the phosphorylation is involved in agonist-induced G-protein-independent receptor down-regulation. In terms of processing, phosphorylated. Differentially phosphorylated in basal and agonist-induced conditions. Agonist-mediated phosphorylation modulates receptor internalization. Phosphorylated by GRK2 in a agonist-dependent manner. Phosphorylated on tyrosine residues; the phosphorylation is involved in agonist-induced G-protein-independent receptor down-regulation. Post-translationally, ubiquitinated. A basal ubiquitination seems not to be related to degradation. Ubiquitination is increased upon formation of OPRM1:OPRD1 oligomers leading to proteasomal degradation; the ubiquitination is diminished by RTP4.

The protein resides in the cell membrane. The protein localises to the cell projection. Its subcellular location is the axon. It localises to the perikaryon. It is found in the dendrite. The protein resides in the endosome. In terms of biological role, receptor for endogenous opioids such as beta-endorphin and endomorphin. Receptor for natural and synthetic opioids including morphine, heroin, DAMGO, fentanyl, etorphine, buprenorphin and methadone. Also activated by enkephalin peptides, such as Met-enkephalin or Met-enkephalin-Arg-Phe, with higher affinity for Met-enkephalin-Arg-Phe. Agonist binding to the receptor induces coupling to an inactive GDP-bound heterotrimeric G-protein complex and subsequent exchange of GDP for GTP in the G-protein alpha subunit leading to dissociation of the G-protein complex with the free GTP-bound G-protein alpha and the G-protein beta-gamma dimer activating downstream cellular effectors. The agonist- and cell type-specific activity is predominantly coupled to pertussis toxin-sensitive G(i) and G(o) G alpha proteins, GNAI1, GNAI2, GNAI3 and GNAO1, and to a lesser extent to pertussis toxin-insensitive G alpha proteins GNAZ and GNA15. They mediate an array of downstream cellular responses, including inhibition of adenylate cyclase activity and both N-type and L-type calcium channels, activation of inward rectifying potassium channels, mitogen-activated protein kinase (MAPK), phospholipase C (PLC), phosphoinositide/protein kinase (PKC), phosphoinositide 3-kinase (PI3K) and regulation of NF-kappa-B. Also couples to adenylate cyclase stimulatory G alpha proteins. The selective temporal coupling to G-proteins and subsequent signaling can be regulated by RGSZ proteins, such as RGS9, RGS17 and RGS4. Phosphorylation by members of the GPRK subfamily of Ser/Thr protein kinases and association with beta-arrestins is involved in short-term receptor desensitization. Beta-arrestins associate with the GPRK-phosphorylated receptor and uncouple it from the G-protein thus terminating signal transduction. The phosphorylated receptor is internalized through endocytosis via clathrin-coated pits which involves beta-arrestins. The activation of the ERK pathway occurs either in a G-protein-dependent or a beta-arrestin-dependent manner and is regulated by agonist-specific receptor phosphorylation. Acts as a class A G-protein coupled receptor (GPCR) which dissociates from beta-arrestin at or near the plasma membrane and undergoes rapid recycling. Receptor down-regulation pathways are varying with the agonist and occur dependent or independent of G-protein coupling. Endogenous ligands induce rapid desensitization, endocytosis and recycling. Heterooligomerization with other GPCRs can modulate agonist binding, signaling and trafficking properties. Involved in neurogenesis. This chain is Mu-type opioid receptor (OPRM1), found in Cavia porcellus (Guinea pig).